Here is a 115-residue protein sequence, read N- to C-terminus: Large ribosomal subunit protein bL19 (115 aa).

This sequence belongs to the bacterial ribosomal protein bL19 family.

Functionally, this protein is located at the 30S-50S ribosomal subunit interface and may play a role in the structure and function of the aminoacyl-tRNA binding site. In Pectobacterium carotovorum subsp. carotovorum (strain PC1), this protein is Large ribosomal subunit protein bL19.